Here is a 252-residue protein sequence, read N- to C-terminus: 5-oxoprolinase subunit A (252 aa).

Belongs to the LamB/PxpA family. In terms of assembly, forms a complex composed of PxpA, PxpB and PxpC.

The enzyme catalyses 5-oxo-L-proline + ATP + 2 H2O = L-glutamate + ADP + phosphate + H(+). In terms of biological role, catalyzes the cleavage of 5-oxoproline to form L-glutamate coupled to the hydrolysis of ATP to ADP and inorganic phosphate. The chain is 5-oxoprolinase subunit A from Mycolicibacterium paratuberculosis (strain ATCC BAA-968 / K-10) (Mycobacterium paratuberculosis).